Here is a 566-residue protein sequence, read N- to C-terminus: Cytochrome c oxidase subunit 1 (566 aa).

Transmembrane regions (helical) follow at residues 29–49 (IGVL…AFTV), 97–117 (VMIT…ALFG), 141–161 (LSYW…FAPG), 189–209 (LAIF…INMI), 227–247 (LFAW…PVLA), 278–298 (ILWF…FGIV), and 310–330 (IFGY…GFVV). Histidine 102 is a binding site for Fe(II)-heme a. Cu cation contacts are provided by histidine 284 and tyrosine 288. Residues 284-288 (HPEVY) constitute a cross-link (1'-histidyl-3'-tyrosine (His-Tyr)). Positions 333 and 334 each coordinate Cu cation. 2 helical membrane-spanning segments follow: residues 348 to 368 (FMMA…SWIA) and 381 to 401 (MLWA…GIVL). Histidine 419 is a binding site for heme a3. Transmembrane regions (helical) follow at residues 420–440 (FHYV…YFWI), 455–475 (LHFW…HFLG), and 499–519 (LGAF…FYTL). Fe(II)-heme a is bound at residue histidine 421. A disordered region spans residues 543 to 566 (TSPPPEHTFEQLPKREDWERAPAH). Residues 549 to 566 (HTFEQLPKREDWERAPAH) show a composition bias toward basic and acidic residues.

Belongs to the heme-copper respiratory oxidase family. Cu(2+) serves as cofactor. Heme is required as a cofactor.

Its subcellular location is the cell membrane. It catalyses the reaction 4 Fe(II)-[cytochrome c] + O2 + 8 H(+)(in) = 4 Fe(III)-[cytochrome c] + 2 H2O + 4 H(+)(out). The protein operates within energy metabolism; oxidative phosphorylation. In terms of biological role, cytochrome c oxidase is the component of the respiratory chain that catalyzes the reduction of oxygen to water. Subunits 1-3 form the functional core of the enzyme complex. Co I is the catalytic subunit of the enzyme. Electrons originating in cytochrome c are transferred via the copper A center of subunit 2 and heme a of subunit 1 to the bimetallic center formed by heme a3 and copper B. This cytochrome c oxidase shows proton pump activity across the membrane in addition to the electron transfer. The chain is Cytochrome c oxidase subunit 1 (ctaD) from Cereibacter sphaeroides (Rhodobacter sphaeroides).